Consider the following 173-residue polypeptide: MPKAVFGGGCFWCLDAVFRKVDGVRDVVVGYAGGRRPNPNYEQVCTGVTGHAEVVEIDYDENTVSYDELLDIFFKIHDPTQLNRQGNDVGTQYRSIILYLDEEQKEKALKKIEELKKEGLNVVTEVKPLEIFYPAEKYHQNYFAKNPHQPYCMYVVAPKVEKYLKIKNENKKT.

Cysteine 10 is a catalytic residue.

The protein belongs to the MsrA Met sulfoxide reductase family.

It catalyses the reaction L-methionyl-[protein] + [thioredoxin]-disulfide + H2O = L-methionyl-(S)-S-oxide-[protein] + [thioredoxin]-dithiol. It carries out the reaction [thioredoxin]-disulfide + L-methionine + H2O = L-methionine (S)-S-oxide + [thioredoxin]-dithiol. Functionally, has an important function as a repair enzyme for proteins that have been inactivated by oxidation. Catalyzes the reversible oxidation-reduction of methionine sulfoxide in proteins to methionine. This is Peptide methionine sulfoxide reductase MsrA from Nautilia profundicola (strain ATCC BAA-1463 / DSM 18972 / AmH).